The primary structure comprises 501 residues: Ribonuclease Y (501 aa).

The chain crosses the membrane as a helical span at residues 7 to 27; the sequence is LVVIALLGALTLLTAGHVLAL. The region spanning 190 to 256 is the KH domain; sequence VVRAVPLPEE…RLTLEKLVAD (67 aa). The region spanning 316–409 is the HD domain; it reads VLAHLVESAH…TQAADAISGG (94 aa).

It belongs to the RNase Y family.

It is found in the cell membrane. Functionally, endoribonuclease that initiates mRNA decay. This is Ribonuclease Y from Thermobifida fusca (strain YX).